The primary structure comprises 311 residues: Methionyl-tRNA formyltransferase (311 aa).

109–112 (SLLP) is a (6S)-5,6,7,8-tetrahydrofolate binding site.

Belongs to the Fmt family.

It catalyses the reaction L-methionyl-tRNA(fMet) + (6R)-10-formyltetrahydrofolate = N-formyl-L-methionyl-tRNA(fMet) + (6S)-5,6,7,8-tetrahydrofolate + H(+). In terms of biological role, attaches a formyl group to the free amino group of methionyl-tRNA(fMet). The formyl group appears to play a dual role in the initiator identity of N-formylmethionyl-tRNA by promoting its recognition by IF2 and preventing the misappropriation of this tRNA by the elongation apparatus. This Solibacter usitatus (strain Ellin6076) protein is Methionyl-tRNA formyltransferase.